The chain runs to 269 residues: Enoyl-[acyl-carrier-protein] reductase [NADH] (269 aa).

NAD(+) is bound by residues 20–21, 64–65, and 95–96; these read SI, DV, and IG. Tyr158 contacts substrate. 2 residues coordinate NAD(+): Lys165 and Ile194. Thr266 bears the Phosphothreonine mark.

This sequence belongs to the short-chain dehydrogenases/reductases (SDR) family. FabI subfamily. Homodimer. Homotetramer. In terms of processing, is phosphorylated in vivo. Phosphorylation on Thr-266 decreases enzymatic activity.

It localises to the secreted. Its subcellular location is the cell wall. It carries out the reaction a 2,3-saturated acyl-[ACP] + NAD(+) = a (2E)-enoyl-[ACP] + NADH + H(+). It catalyses the reaction a 2,3-saturated acyl-CoA + NAD(+) = a (2E)-enoyl-CoA + NADH + H(+). The catalysed reaction is (2E)-octenoyl-CoA + NADH + H(+) = octanoyl-CoA + NAD(+). The enzyme catalyses (2E)-dodecenoyl-CoA + NADH + H(+) = dodecanoyl-CoA + NAD(+). Its pathway is lipid metabolism; mycolic acid biosynthesis. Its activity is regulated as follows. InhA activity is controlled via phosphorylation: phosphorylation on Thr-266 decreases InhA activity and likely negatively regulates biosynthesis of mycolic acids and growth of the bacterium. InhA activity is likely inhibited by activated isoniazid, hexadecynoyl-CoA and octadecynoyl-CoA, which also block the biosynthesis of mycolic acids. The antitubercular pro-drug isoniazid (INH) is oxidatively activated by the catalase-peroxidase KatG and then covalently binds NAD to form an adduct that inhibits the activity of InhA. The inhibitory adduct is the isonicotinic-acyl-NADH where the isonicotinic-acyl group replaces the 4S (and not the 4R) hydrogen of NADH. Similarly, the antitubercular pro-drugs ethionamide (ETH) and prothionamide (PTH) are activated by the flavoprotein monooxygenase EthA, and forms an adduct with NAD (ETH-NAD and PTH-NAD, respectively) that is a tight-binding inhibitor of InhA. Enoyl-ACP reductase of the type II fatty acid syntase (FAS-II) system, which is involved in the biosynthesis of mycolic acids, a major component of mycobacterial cell walls. Catalyzes the NADH-dependent reduction of the double bond of 2-trans-enoyl-[acyl-carrier protein], an essential step in the fatty acid elongation cycle of the FAS-II pathway. Shows preference for long-chain fatty acyl thioester substrates (&gt;C16), and can also use 2-trans-enoyl-CoAs as alternative substrates. The mycobacterial FAS-II system utilizes the products of the FAS-I system as primers to extend fatty acyl chain lengths up to C56, forming the meromycolate chain that serves as the precursor for final mycolic acids. Its function is as follows. Is the primary target of the first-line antitubercular drug isoniazid (INH) and of the second-line drug ethionamide (ETH). Overexpressed inhA confers INH and ETH resistance to M.smegmatis. The mechanism of isoniazid action against InhA is covalent attachment of the activated form of the drug to the nicotinamide ring of NAD and binding of the INH-NAD adduct to the active site of InhA. Similarly, the ETH-NAD adduct binds InhA. The chain is Enoyl-[acyl-carrier-protein] reductase [NADH] from Mycolicibacterium smegmatis (strain ATCC 700084 / mc(2)155) (Mycobacterium smegmatis).